A 471-amino-acid polypeptide reads, in one-letter code: Glutamate--tRNA ligase (471 aa).

The short motif at 9-19 (PSPTGYLHVGG) is the 'HIGH' region element. Residues cysteine 98, cysteine 100, cysteine 125, and histidine 127 each coordinate Zn(2+). The 'KMSKS' region motif lies at 237–241 (KLSKR). Lysine 240 lines the ATP pocket.

It belongs to the class-I aminoacyl-tRNA synthetase family. Glutamate--tRNA ligase type 1 subfamily. In terms of assembly, monomer. Requires Zn(2+) as cofactor.

It is found in the cytoplasm. It catalyses the reaction tRNA(Glu) + L-glutamate + ATP = L-glutamyl-tRNA(Glu) + AMP + diphosphate. In terms of biological role, catalyzes the attachment of glutamate to tRNA(Glu) in a two-step reaction: glutamate is first activated by ATP to form Glu-AMP and then transferred to the acceptor end of tRNA(Glu). The polypeptide is Glutamate--tRNA ligase (Escherichia coli O6:K15:H31 (strain 536 / UPEC)).